The chain runs to 182 residues: Dirigent protein 5 (182 aa).

The N-terminal stretch at 1 to 23 (MVGQMKSFLFLFVFLVLTKTVIS) is a signal peptide. The cysteines at positions 35 and 181 are disulfide-linked. N-linked (GlcNAc...) asparagine glycans are attached at residues N54 and N118.

It belongs to the plant dirigent protein family. As to quaternary structure, homodimer. Confined to shoot meristem, vascular region of cotyledons and siliques abscission zone.

The protein localises to the secreted. It is found in the extracellular space. Its subcellular location is the apoplast. In terms of biological role, dirigent proteins impart stereoselectivity on the phenoxy radical-coupling reaction, yielding optically active lignans from two molecules of coniferyl alcohol in the biosynthesis of lignans, flavonolignans, and alkaloids and thus plays a central role in plant secondary metabolism. Enantiocomplementary dirigent protein that mediates the laccase-catalyzed enantioselective oxidative phenol coupling of (E)-coniferyl alcohol to (-)-pinoresinol. In Arabidopsis thaliana (Mouse-ear cress), this protein is Dirigent protein 5 (DIR5).